Here is a 500-residue protein sequence, read N- to C-terminus: MAASFVIVIVISFFISLAFMCYVHYTSRQRRKLHGYGHEKAVRLPPGSMGWPYIGETLQLYSQDPNVFFASKQKRYGEIFKTHILGCPCVMLASPEAARFVLVTQAHLFKPTYPRSKERMIGPSALFFNQGDYHLRLRKLVQGPLGPDALRALVPDVEAAVRSTLASWDGNVSSTFHAMKRLSFDVGIVTIFGGRLDERRKAELRQNYAIVEKGYNSFPNSFPGTLYYKAIQARRRLHGVLSDIMRERRARGEPGSDLLGCLMQSRAGDDGALLTDEQVADNIIGVLFAAQDTTASVLTWIVKYLHDHPKLLEAVRAEQAAIRAANDGGRLPLTWAQTRSMALTHKVILESLRMASIISFTFREAVADVEYKGFLIPKGWKVMPLFRNIHHNPDYFQDPQKFDPSRFKVSPRPNTFMPFGNGVHACPGNELAKLEMLVLIHHLVTGYRWEIVGSSDEVEYSPFPVPKHGLLAKLWRDDTVSVETDGCQNGDNDDNGVAMV.

The chain crosses the membrane as a helical span at residues 3-23 (ASFVIVIVISFFISLAFMCYV). Cysteine 426 provides a ligand contact to heme.

The protein belongs to the cytochrome P450 family. The cofactor is heme.

Its subcellular location is the membrane. It catalyses the reaction 2-cis-(+)-abscisate + reduced [NADPH--hemoprotein reductase] + O2 = (+)-8'-hydroxyabscisate + oxidized [NADPH--hemoprotein reductase] + H2O + H(+). Its pathway is plant hormone degradation; abscisic acid degradation. Its function is as follows. Involved in the oxidative degradation of abscisic acid. This Oryza sativa subsp. indica (Rice) protein is Abscisic acid 8'-hydroxylase 3 (CYP707A7).